The primary structure comprises 343 residues: Nuclear hormone receptor family member nhr-167 (343 aa).

Positions 5-81 form a DNA-binding region, nuclear receptor; sequence HQKCAVCGRF…VGMTLPSYLL (77 aa). 2 consecutive NR C4-type zinc fingers follow at residues 8–28 and 45–64; these read CAVC…CNSC and CFRG…CTSC. The NR LBD domain maps to 101–339; sequence THNKRMDSLF…KKLVKDGIEA (239 aa).

Belongs to the nuclear hormone receptor family.

It is found in the nucleus. In terms of biological role, orphan nuclear receptor. The protein is Nuclear hormone receptor family member nhr-167 (nhr-167) of Caenorhabditis elegans.